Here is a 746-residue protein sequence, read N- to C-terminus: Root phototropism protein 3 (746 aa).

Positions 1–24 (MMWESESDGGVGVGGGGGREYGDG) are disordered. The span at 9–19 (GGVGVGGGGGR) shows a compositional bias: gly residues. The 69-residue stretch at 54–122 (SDLLVKIGDM…CYGVPVDLTA (69 aa)) folds into the BTB domain. The region spanning 250 to 605 (DWWFEDVSIL…VQVLFSEQVK (356 aa)) is the NPH3 domain. The interval 461 to 500 (EQTEGSSPSRMSPSPSQSMYADIPRGNNNNGGGGGGNNQN) is disordered. Residues 466–478 (SSPSRMSPSPSQS) show a composition bias toward low complexity. Position 546 is a phosphotyrosine (tyrosine 546). Positions 708–746 (SKLTKMSGQESHDISSGGEQAGVDHPPPRKPRRWRNSIS) are disordered. Positions 735–746 (PRKPRRWRNSIS) are enriched in basic residues.

It belongs to the NPH3 family. Interacts with PKS1, PKS2, RPT2, PHOT1 and PHOT2. Subunit of a complex made of CAR6, PHOT1 and RPT3/NPH3. In terms of processing, phosphorylated in the dark. Expressed in hypocotyls, guard cells and mesophyll cells.

It localises to the cell membrane. It functions in the pathway protein modification; protein ubiquitination. Functionally, may act as a substrate-specific adapter of an E3 ubiquitin-protein ligase complex (CUL3-RBX1-BTB) which mediates the ubiquitination and subsequent proteasomal degradation of target proteins. Signal transducer of the phototropic response and photo-induced movements. Involved in the phot1 pathway under low blue light (LBL) fluence rate and in the phot2 pathway under higher fluence rate of blue light (HBL). Necessary for root and hypocotyl phototropisms, but not for the regulation of stomata opening. Not involved in chloroplast accumulation and translocation. The protein is Root phototropism protein 3 (RPT3) of Arabidopsis thaliana (Mouse-ear cress).